We begin with the raw amino-acid sequence, 137 residues long: NADPH-dependent 7-cyano-7-deazaguanine reductase (137 aa).

Cysteine 50 serves as the catalytic Thioimide intermediate. Aspartate 57 (proton donor) is an active-site residue. Residues 72–74 and 91–92 each bind substrate; these read VEL and HE.

This sequence belongs to the GTP cyclohydrolase I family. QueF type 1 subfamily.

It localises to the cytoplasm. It catalyses the reaction 7-aminomethyl-7-carbaguanine + 2 NADP(+) = 7-cyano-7-deazaguanine + 2 NADPH + 3 H(+). It functions in the pathway tRNA modification; tRNA-queuosine biosynthesis. In terms of biological role, catalyzes the NADPH-dependent reduction of 7-cyano-7-deazaguanine (preQ0) to 7-aminomethyl-7-deazaguanine (preQ1). This is NADPH-dependent 7-cyano-7-deazaguanine reductase from Synechococcus sp. (strain CC9902).